Reading from the N-terminus, the 130-residue chain is Glycine cleavage system H protein (130 aa).

A Lipoyl-binding domain is found at S24–Q106. Residue K65 is modified to N6-lipoyllysine.

Belongs to the GcvH family. The glycine cleavage system is composed of four proteins: P, T, L and H. The cofactor is (R)-lipoate.

In terms of biological role, the glycine cleavage system catalyzes the degradation of glycine. The H protein shuttles the methylamine group of glycine from the P protein to the T protein. The polypeptide is Glycine cleavage system H protein (Halorhodospira halophila (strain DSM 244 / SL1) (Ectothiorhodospira halophila (strain DSM 244 / SL1))).